Here is a 358-residue protein sequence, read N- to C-terminus: Extracellular phospholipase C (358 aa).

The protein resides in the secreted. This chain is Extracellular phospholipase C (plcA), found in Dickeya chrysanthemi (Pectobacterium chrysanthemi).